Here is a 269-residue protein sequence, read N- to C-terminus: 4-hydroxy-tetrahydrodipicolinate reductase (269 aa).

Residues 8 to 13 (GAAGRM) and glutamate 34 each bind NAD(+). Position 35 (arginine 35) interacts with NADP(+). NAD(+) is bound by residues 98 to 100 (GTT) and 122 to 125 (APNY). The Proton donor/acceptor role is filled by histidine 155. Histidine 156 contacts (S)-2,3,4,5-tetrahydrodipicolinate. Lysine 159 serves as the catalytic Proton donor. 165–166 (GT) contributes to the (S)-2,3,4,5-tetrahydrodipicolinate binding site.

Belongs to the DapB family.

The protein resides in the cytoplasm. It carries out the reaction (S)-2,3,4,5-tetrahydrodipicolinate + NAD(+) + H2O = (2S,4S)-4-hydroxy-2,3,4,5-tetrahydrodipicolinate + NADH + H(+). The enzyme catalyses (S)-2,3,4,5-tetrahydrodipicolinate + NADP(+) + H2O = (2S,4S)-4-hydroxy-2,3,4,5-tetrahydrodipicolinate + NADPH + H(+). It functions in the pathway amino-acid biosynthesis; L-lysine biosynthesis via DAP pathway; (S)-tetrahydrodipicolinate from L-aspartate: step 4/4. Its function is as follows. Catalyzes the conversion of 4-hydroxy-tetrahydrodipicolinate (HTPA) to tetrahydrodipicolinate. The sequence is that of 4-hydroxy-tetrahydrodipicolinate reductase from Vibrio atlanticus (strain LGP32) (Vibrio splendidus (strain Mel32)).